The primary structure comprises 64 residues: Large ribosomal subunit protein uL29 (64 aa).

Belongs to the universal ribosomal protein uL29 family.

The protein is Large ribosomal subunit protein uL29 of Levilactobacillus brevis (strain ATCC 367 / BCRC 12310 / CIP 105137 / JCM 1170 / LMG 11437 / NCIMB 947 / NCTC 947) (Lactobacillus brevis).